Consider the following 100-residue polypeptide: Dromyosuppressin (100 aa).

A signal peptide spans 1 to 24; it reads MSFAQFFVACCLAIVLLAVSNTRA. Residues 25-84 constitute a propeptide that is removed on maturation; it reads AVQGPPLCQSGIVEEMPPHIRKVCQALENSDQLTSALKSYINNEASALVANSDDLLKNYN. Phenylalanine 96 carries the post-translational modification Phenylalanine amide.

This sequence belongs to the myosuppressin family.

It is found in the secreted. In terms of biological role, myoinhibiting neuropeptide. The chain is Dromyosuppressin from Drosophila melanogaster (Fruit fly).